Here is a 207-residue protein sequence, read N- to C-terminus: Urease accessory protein UreE (207 aa).

The segment at His-171–His-207 is disordered. Basic and acidic residues predominate over residues His-180 to His-194.

The protein belongs to the UreE family.

It localises to the cytoplasm. Its function is as follows. Involved in urease metallocenter assembly. Binds nickel. Probably functions as a nickel donor during metallocenter assembly. In Burkholderia lata (strain ATCC 17760 / DSM 23089 / LMG 22485 / NCIMB 9086 / R18194 / 383), this protein is Urease accessory protein UreE.